The following is a 1191-amino-acid chain: DNA-directed RNA polymerase II subunit RPB2 (1191 aa).

Aspartate 799 is a binding site for Mg(2+). The disordered stretch occupies residues 842–903; it reads ASTMGMRHGS…RKDHSTSLRH (62 aa). Polar residues predominate over residues 878–891; sequence TPISQDDAQGQASR. A compositionally biased stretch (basic and acidic residues) spans 893–903; sequence TRKDHSTSLRH. Positions 1123, 1126, 1141, and 1144 each coordinate Zn(2+). Residues 1123 to 1144 form a C4-type zinc finger; that stretch reads CERCGLIAIANLKKNSFECRGC.

Belongs to the RNA polymerase beta chain family. In terms of assembly, component of the RNA polymerase II (Pol II) complex consisting of 12 subunits.

It is found in the nucleus. The enzyme catalyses RNA(n) + a ribonucleoside 5'-triphosphate = RNA(n+1) + diphosphate. Functionally, DNA-dependent RNA polymerase catalyzes the transcription of DNA into RNA using the four ribonucleoside triphosphates as substrates. Second largest component of RNA polymerase II which synthesizes mRNA precursors and many functional non-coding RNAs. Proposed to contribute to the polymerase catalytic activity and forms the polymerase active center together with the largest subunit. Pol II is the central component of the basal RNA polymerase II transcription machinery. It is composed of mobile elements that move relative to each other. RPB2 is part of the core element with the central large cleft, the clamp element that moves to open and close the cleft and the jaws that are thought to grab the incoming DNA template. This Solanum lycopersicum (Tomato) protein is DNA-directed RNA polymerase II subunit RPB2 (RPB2).